A 112-amino-acid chain; its full sequence is Mitochondrial import inner membrane translocase subunit TIM14-2 (112 aa).

A helical membrane pass occupies residues 7-25 (AGAAVAAAAYAGKYGIEAW). In terms of domain architecture, J spans 53–112 (EAALILGVRESVAAEKVKEAHRRVMVANHPDAGGSHYLASKINEAKDMMLGKTKNSGSAF).

The protein belongs to the TIM14 family. As to quaternary structure, probable component of the PAM complex at least composed of a mitochondrial HSP70 protein, TIMM44 and TIMM14. The complex interacts with the TIMM23 component of the TIM17:23 complex.

The protein localises to the mitochondrion. It localises to the mitochondrion inner membrane. In terms of biological role, component of the PAM complex, a complex required for the translocation of transit peptide-containing proteins from the inner membrane into the mitochondrial matrix in an ATP-dependent manner. The protein is Mitochondrial import inner membrane translocase subunit TIM14-2 (TIM14-2) of Arabidopsis thaliana (Mouse-ear cress).